Consider the following 344-residue polypeptide: Phenylalanine--tRNA ligase alpha subunit (344 aa).

Mg(2+) is bound at residue Glu-256.

The protein belongs to the class-II aminoacyl-tRNA synthetase family. Phe-tRNA synthetase alpha subunit type 1 subfamily. As to quaternary structure, tetramer of two alpha and two beta subunits. Requires Mg(2+) as cofactor.

The protein resides in the cytoplasm. The enzyme catalyses tRNA(Phe) + L-phenylalanine + ATP = L-phenylalanyl-tRNA(Phe) + AMP + diphosphate + H(+). This Bacillus subtilis (strain 168) protein is Phenylalanine--tRNA ligase alpha subunit (pheS).